The primary structure comprises 491 residues: Probable cytosol aminopeptidase (491 aa).

Mn(2+) contacts are provided by K264 and D269. K276 is an active-site residue. 3 residues coordinate Mn(2+): D287, D346, and E348. The active site involves R350.

This sequence belongs to the peptidase M17 family. Requires Mn(2+) as cofactor.

It is found in the cytoplasm. The catalysed reaction is Release of an N-terminal amino acid, Xaa-|-Yaa-, in which Xaa is preferably Leu, but may be other amino acids including Pro although not Arg or Lys, and Yaa may be Pro. Amino acid amides and methyl esters are also readily hydrolyzed, but rates on arylamides are exceedingly low.. The enzyme catalyses Release of an N-terminal amino acid, preferentially leucine, but not glutamic or aspartic acids.. Functionally, presumably involved in the processing and regular turnover of intracellular proteins. Catalyzes the removal of unsubstituted N-terminal amino acids from various peptides. The protein is Probable cytosol aminopeptidase of Xylella fastidiosa (strain 9a5c).